Consider the following 126-residue polypeptide: Nitrogenase-stabilizing/protective protein NifW (126 aa).

The tract at residues 104–126 (VPMSEITVERPATTQTDEKGQQR) is disordered.

It belongs to the NifW family. As to quaternary structure, homotrimer; associates with NifD.

May protect the nitrogenase Fe-Mo protein from oxidative damage. The sequence is that of Nitrogenase-stabilizing/protective protein NifW from Parafrankia sp. (strain EAN1pec).